A 218-amino-acid polypeptide reads, in one-letter code: Adenylate kinase (218 aa).

Position 10–15 (10–15 (GAGKGT)) interacts with ATP. The NMP stretch occupies residues 30–59 (STGDMLRAAVKAGTPLGQQAKAVMDAGQLV). AMP-binding positions include Thr31, Arg36, 57 to 59 (QLV), 85 to 88 (GFPR), and Gln92. An LID region spans residues 122-159 (GRRSHPASGRTYHVKFNPPKVEGQDDVTGEPLVQREDD). ATP-binding positions include Arg123 and 132 to 133 (TY). Positions 127–151 (PASGRTYHVKFNPPKVEGQDDVTGE) are disordered. AMP contacts are provided by Arg156 and Arg167. Gly203 contacts ATP.

Belongs to the adenylate kinase family. Monomer.

The protein localises to the cytoplasm. The enzyme catalyses AMP + ATP = 2 ADP. The protein operates within purine metabolism; AMP biosynthesis via salvage pathway; AMP from ADP: step 1/1. Its function is as follows. Catalyzes the reversible transfer of the terminal phosphate group between ATP and AMP. Plays an important role in cellular energy homeostasis and in adenine nucleotide metabolism. The protein is Adenylate kinase of Delftia acidovorans (strain DSM 14801 / SPH-1).